The sequence spans 261 residues: Triosephosphate isomerase (261 aa).

10–12 (NWK) contacts substrate. His100 functions as the Electrophile in the catalytic mechanism. The active-site Proton acceptor is Glu172. Substrate is bound by residues Gly178, Ser218, and 239–240 (GG).

This sequence belongs to the triosephosphate isomerase family. As to quaternary structure, homodimer.

The protein resides in the cytoplasm. It carries out the reaction D-glyceraldehyde 3-phosphate = dihydroxyacetone phosphate. It functions in the pathway carbohydrate biosynthesis; gluconeogenesis. Its pathway is carbohydrate degradation; glycolysis; D-glyceraldehyde 3-phosphate from glycerone phosphate: step 1/1. Functionally, involved in the gluconeogenesis. Catalyzes stereospecifically the conversion of dihydroxyacetone phosphate (DHAP) to D-glyceraldehyde-3-phosphate (G3P). The sequence is that of Triosephosphate isomerase from Mycobacterium leprae (strain TN).